We begin with the raw amino-acid sequence, 262 residues long: Ribose-5-phosphate isomerase A (262 aa).

Substrate contacts are provided by residues 33-36 (TGST), 89-92 (DGTD), and 102-105 (KGGG). The active-site Proton acceptor is the Glu-111. Lys-129 contributes to the substrate binding site.

This sequence belongs to the ribose 5-phosphate isomerase family. In terms of assembly, homodimer.

The catalysed reaction is aldehydo-D-ribose 5-phosphate = D-ribulose 5-phosphate. It participates in carbohydrate degradation; pentose phosphate pathway; D-ribose 5-phosphate from D-ribulose 5-phosphate (non-oxidative stage): step 1/1. In terms of biological role, catalyzes the reversible conversion of ribose-5-phosphate to ribulose 5-phosphate. This Jannaschia sp. (strain CCS1) protein is Ribose-5-phosphate isomerase A.